We begin with the raw amino-acid sequence, 418 residues long: Hepatic and glial cell adhesion molecule (418 aa).

The first 33 residues, 1–33 (MKRERGALSRASRALRLSPFVYLLLIQPVPLEG), serve as a signal peptide directing secretion. An Ig-like V-type domain is found at 34–142 (VNITSPVRLI…GEKTINLTVD (109 aa)). At 34–240 (VNITSPVRLI…VKITVYRRSS (207 aa)) the chain is on the extracellular side. N-linked (GlcNAc...) asparagine glycosylation is found at Asn35, Asn138, Asn167, and Asn189. Positions 148–234 (PQVLVASTTV…QVRSLPVKIT (87 aa)) constitute an Ig-like C2-type domain. Cys168 and Cys217 are disulfide-bonded. A helical membrane pass occupies residues 241 to 261 (LYIILSTGGIFLLVTLVTVCA). Residues 262 to 418 (CWKPSKKSRK…DESGQVEISA (157 aa)) are Cytoplasmic-facing. The tract at residues 271–418 (KKRKLEKQNS…DESGQVEISA (148 aa)) is disordered. Residue Ser280 is modified to Phosphoserine. Residues 287–308 (NDDRLKSEADTLPRSGEQERKN) show a composition bias toward basic and acidic residues. Residues Ser321, Ser352, and Ser379 each carry the phosphoserine modification. The segment covering 341 to 358 (GYSVSPPVPGRSPGLPIR) has biased composition (low complexity). The segment covering 385–396 (SSPGRSRSSSRS) has biased composition (low complexity).

As to quaternary structure, homodimer. Dimer formation occurs predominantly through cis interactions on the cell surface. Part of a complex containing MLC1, TRPV4, AQP4 and ATP1B1. Interacts with CLCN2. Post-translationally, N-glycosylated.

The protein resides in the cytoplasm. It is found in the cell membrane. Its function is as follows. Involved in regulating cell motility and cell-matrix interactions. May inhibit cell growth through suppression of cell proliferation. In glia, associates and targets CLCN2 at astrocytic processes and myelinated fiber tracts where it may regulate transcellular chloride flux involved in neuron excitability. This is Hepatic and glial cell adhesion molecule from Mus musculus (Mouse).